The chain runs to 748 residues: Acetyl-CoA decarbonylase/synthase complex subunit beta 1 (748 aa).

[Ni-Fe-S] cluster is bound by residues Cys-480, Cys-483, Cys-569, and Cys-571.

The protein belongs to the CdhC family. As to quaternary structure, monomer. The ACDS complex is made up of alpha, epsilon, beta, gamma and delta chains with a probable stoichiometry of (alpha(2)epsilon(2))(4)-beta(8)-(gamma(1)delta(1))(8) (Potential). [Ni-Fe-S] cluster is required as a cofactor.

The enzyme catalyses Co(I)-[corrinoid Fe-S protein] + acetyl-CoA + H(+) = methyl-Co(III)-[corrinoid Fe-S protein] + CO + CoA. In terms of biological role, part of a complex that catalyzes the reversible cleavage of acetyl-CoA, allowing autotrophic growth from CO(2). The alpha-epsilon complex generates CO from CO(2), while the beta subunit (this protein) combines the CO with CoA and a methyl group to form acetyl-CoA. The methyl group, which is incorporated into acetyl-CoA, is transferred to the beta subunit by a corrinoid iron-sulfur protein (the gamma-delta complex). This Methanocaldococcus jannaschii (strain ATCC 43067 / DSM 2661 / JAL-1 / JCM 10045 / NBRC 100440) (Methanococcus jannaschii) protein is Acetyl-CoA decarbonylase/synthase complex subunit beta 1 (cdhC1).